A 792-amino-acid polypeptide reads, in one-letter code: Kinesin-like protein KIF3C (792 aa).

Residues 10-363 (ALKVVARCRP…LRFANRAKNI (354 aa)) enclose the Kinesin motor domain. Residue 97–104 (GQTGTGKT) coordinates ATP. 3 disordered regions span residues 249 to 287 (GSER…RPKE), 397 to 418 (MLGK…APAG), and 749 to 792 (RPST…LDHE). A compositionally biased stretch (low complexity) spans 257 to 268 (GPNTTGGTATQP). A compositionally biased stretch (gly residues) spans 269 to 282 (TGGGGGGGGGGGGG). A coiled-coil region spans residues 374–627 (KDTLLREFQE…QNEQTRELKL (254 aa)). The span at 397–412 (MLGKRLRRKSSRRKKA) shows a compositional bias: basic residues. Residues 628–792 (KYLIIENFIP…LRPTTVLDHE (165 aa)) form a globular region. Positions 773 to 792 (AHASLAASAALRPTTVLDHE) are enriched in low complexity.

Belongs to the TRAFAC class myosin-kinesin ATPase superfamily. Kinesin family. Kinesin II subfamily. Heterodimer of KIF3A and KIF3C.

It is found in the cytoplasm. Its subcellular location is the cytoskeleton. In terms of biological role, microtubule-based anterograde translocator for membranous organelles. This Bos taurus (Bovine) protein is Kinesin-like protein KIF3C (KIF3C).